We begin with the raw amino-acid sequence, 477 residues long: Otolin-1 (477 aa).

A signal peptide spans 1-23; it reads MWMFSWLCAILIILAIAGMNTIA. Disordered regions lie at residues 28–55 and 111–337; these read HTKF…PEEE and QKGE…KGEL. Basic and acidic residues predominate over residues 33–42; it reads KKSEEREMPK. The Collagen-like 1 domain occupies 116-175; sequence GETGQPGPKGEAGNLGIPGPPGVVGPQGPRGYKGEKGLKGERGDQGVPGYPGKPGAQGEP. A hydroxyproline mark is found at Pro-133 and Pro-136. Positions 147–159 are enriched in basic and acidic residues; it reads YKGEKGLKGERGD. Residues Pro-163, Pro-166, and Pro-169 each carry the hydroxyproline modification. Lys-178 bears the 5-hydroxylysine mark. Lys-178 carries an O-linked (Gal...) hydroxylysine glycan. The segment covering 182–191 has biased composition (gly residues); the sequence is GNIGLGGVKG. Asn-202 carries N-linked (GlcNAc...) asparagine glycosylation. Collagen-like domains lie at 209-268 and 278-337; these read GDQG…KGSK and GRNG…KGEL. Residue Pro-223 is modified to Hydroxyproline. Basic and acidic residues-rich tracts occupy residues 226-240 and 247-277; these read KGEK…EMGD and SGER…EGKS. Hydroxyproline occurs at positions 283 and 301. Over residues 298–310 the composition is skewed to low complexity; sequence LGPPGLLGPTGPK. A 5-hydroxylysine modification is found at Lys-310. Lys-310 carries O-linked (Gal...) hydroxylysine glycosylation. Residues 338–473 form the C1q domain; it reads ARVPRSAFSA…GFLLYPEETS (136 aa). The N-linked (GlcNAc...) asparagine glycan is linked to Asn-381.

The protein belongs to the OTOL1 family. As to quaternary structure, homooligomer; disulfide-linked; probably forms homotrimers. Interacts with OC90. Interacts with CBLN1.

The protein localises to the secreted. It is found in the extracellular space. It localises to the extracellular matrix. Collagen-like protein specifically expressed in the inner ear, which provides an organic scaffold for otoconia, a calcium carbonate structure in the saccule and utricle of the ear. Acts as a scaffold for biomineralization: sequesters calcium and forms interconnecting fibrils between otoconia that are incorporated into the calcium crystal structure. Together with OC90, modulates calcite crystal morphology and growth kinetics. This is Otolin-1 from Homo sapiens (Human).